Reading from the N-terminus, the 106-residue chain is 10 kDa heat shock protein, mitochondrial (106 aa).

Ser2 carries the post-translational modification N-acetylserine. Phosphoserine is present on Ser31.

This sequence belongs to the GroES chaperonin family. As to quaternary structure, homohexamer. The N-terminus is blocked.

It localises to the mitochondrion matrix. Functionally, eukaryotic CPN10 homolog which is essential for mitochondrial protein biogenesis, together with CPN60. Binds to CPN60 in the presence of Mg-ATP and suppresses the ATPase activity of the latter. This is 10 kDa heat shock protein, mitochondrial (HSP10) from Saccharomyces cerevisiae (strain ATCC 204508 / S288c) (Baker's yeast).